The sequence spans 187 residues: MLDSVKRADVFLRKPAPVAPELQHEIEQFYYWEAKLLNDRRFEEWFALLAADIHYFMPIRTTRIMRDARLEYSGTGEHAHFDDDAAMMKGRLRKVTSDVGWSENPASRTRHLVSNVMIADGPVEGEYEISSAFIVYRNRLERQLDIFAGERRDTLRRNKTETGFEIVNRTILIDQSTILANNLSFFF.

The protein belongs to the bacterial ring-hydroxylating dioxygenase beta subunit family. As to quaternary structure, this dioxygenase system consists of four proteins: the two subunits of the oxygenase component (TecA1 and TecA2), a ferredoxin (TecA3) and a ferredoxin reductase (TecA4).

The catalysed reaction is chlorobenzene + NADH + O2 + H(+) = (1R,2R)-3-chlorocyclohexa-3,5-diene-1,2-diol + NAD(+). It functions in the pathway aromatic compound metabolism. In terms of biological role, part of the oxygenase component of the chlorobenzene dioxygenase system that catalyzes the dihydroxylation of a range of aromatic compounds, including chlorinated benzenes and toluenes, and dinuclear aromatics such as biphenyl and dibenzo-p-dioxin. The beta subunit is not directly involved in the control of substrate specificity. This chain is Chlorobenzene dioxygenase subunit beta, found in Cupriavidus sp. (strain PS12).